Reading from the N-terminus, the 161-residue chain is Phage-like element PBSX protein XkdI (161 aa).

The protein to B.subtilis YqbI.

The polypeptide is Phage-like element PBSX protein XkdI (xkdI) (Bacillus subtilis (strain 168)).